The following is a 721-amino-acid chain: 1,4-alpha-glucan branching enzyme GlgB (721 aa).

D404 acts as the Nucleophile in catalysis. E457 serves as the catalytic Proton donor.

It belongs to the glycosyl hydrolase 13 family. GlgB subfamily. As to quaternary structure, monomer.

It catalyses the reaction Transfers a segment of a (1-&gt;4)-alpha-D-glucan chain to a primary hydroxy group in a similar glucan chain.. Its pathway is glycan biosynthesis; glycogen biosynthesis. In terms of biological role, catalyzes the formation of the alpha-1,6-glucosidic linkages in glycogen by scission of a 1,4-alpha-linked oligosaccharide from growing alpha-1,4-glucan chains and the subsequent attachment of the oligosaccharide to the alpha-1,6 position. The polypeptide is 1,4-alpha-glucan branching enzyme GlgB (Bradyrhizobium diazoefficiens (strain JCM 10833 / BCRC 13528 / IAM 13628 / NBRC 14792 / USDA 110)).